The following is an 826-amino-acid chain: U4/U6 snRNA-associated-splicing factor PRP24 (826 aa).

RRM domains lie at 310-385 (TSVF…EAAG), 386-463 (ITLY…YSDP), 477-554 (REVH…LSVS), and 598-670 (RSFA…AVPQ).

It localises to the nucleus. In terms of biological role, functions as a recycling factor of the spliceosome, a machinery that forms on each precursor-messenger RNA (pre-mRNA) and catalyzes the removal of introns. Chaperones the re-annealing of U4 and U6 snRNAs (small nuclear RNAs) released from previous rounds of splicing, an initial step in reforming the U4/U6-U5 tri-snRNP (small nuclear ribonucleoprotein) that can reassemble into another spliceosome complex; this step involves binding U6 and facilitating the unwinding of the U6 internal stem loop, followed by base-pairing of U6 to U4. This is U4/U6 snRNA-associated-splicing factor PRP24 from Ophiostoma ulmi (Dutch elm disease fungus).